Consider the following 24-residue polypeptide: M-ectatotoxin-Eb2b (24 aa).

Expressed by the venom gland.

It localises to the secreted. Antimicrobial peptide active against Gram-negative bacterium E.coli MH1 (MIC=2.5 uM) and P.aeruginosa PAO1 (MIC=10 uM) and against Gram-positive bacterium A.globiformis VKM Ac-1112 (MIC=0.6 uM). The protein is M-ectatotoxin-Eb2b of Ectatomma brunneum (Ant).